A 1229-amino-acid polypeptide reads, in one-letter code: ABC transporter B family member 22 (1229 aa).

Transmembrane regions (helical) follow at residues 22 to 42, 69 to 89, 145 to 167, 171 to 193, 251 to 271, and 274 to 294; these read MGLGLIGAVGDGFITPIIFFI, VALLYVAGASLVICFVEGYCW, LPNFLMSASAFVASYIVGFIMLW, IVGFPFFILLLIPGLMCGRALIN, GIAIGSNGVTYAIWGFMTWYG, and MVMYHGAKGGTIFAVIICITY. In terms of domain architecture, ABC transmembrane type-1 1 spans 22 to 311; sequence MGLGLIGAVG…GLSNLKYFSE (290 aa). Positions 346 to 582 constitute an ABC transporter 1 domain; that stretch reads VQFKHVKFMY…VDGQYTSLVR (237 aa). 381-388 provides a ligand contact to ATP; sequence GGSGSGKS. N-linked (GlcNAc...) asparagine glycans are attached at residues N529 and N594. 2 helical membrane passes run 661-681 and 703-723; these read ALYGCLSAVLYGALHPIYAYA and IYVLLFVGLAVLCFLISIIQQ. In terms of domain architecture, ABC transmembrane type-1 2 spans 661–949; the sequence is ALYGCLSAVL…AGAMTMDLAK (289 aa). A glycan (N-linked (GlcNAc...) asparagine) is linked at N758. Transmembrane regions (helical) follow at residues 782 to 800, 807 to 823, 885 to 908, and 923 to 943; these read VSLLVQTISAVSVACTLGL, SIVMIAIQPVVVGCFYT, WLAGIVLATSRSLMTCTSALNYWY, and FFELFILFVSTGRVIADAGAM. One can recognise an ABC transporter 2 domain in the interval 984-1222; it reads IKFVNVDFAY…GPTGVYFSLV (239 aa). N-linked (GlcNAc...) asparagine glycosylation is present at N1004. Residue 1019 to 1026 coordinates ATP; it reads GPSGSGKS. The N-linked (GlcNAc...) asparagine glycan is linked to N1157.

The protein belongs to the ABC transporter superfamily. ABCB family. Multidrug resistance exporter (TC 3.A.1.201) subfamily.

It is found in the membrane. In Arabidopsis thaliana (Mouse-ear cress), this protein is ABC transporter B family member 22 (ABCB22).